Here is a 297-residue protein sequence, read N- to C-terminus: 4-hydroxy-tetrahydrodipicolinate synthase (297 aa).

Thr46 contributes to the pyruvate binding site. The active-site Proton donor/acceptor is Tyr134. Residue Lys162 is the Schiff-base intermediate with substrate of the active site. Ile204 contributes to the pyruvate binding site.

Belongs to the DapA family. As to quaternary structure, homotetramer; dimer of dimers.

Its subcellular location is the cytoplasm. It catalyses the reaction L-aspartate 4-semialdehyde + pyruvate = (2S,4S)-4-hydroxy-2,3,4,5-tetrahydrodipicolinate + H2O + H(+). The protein operates within amino-acid biosynthesis; L-lysine biosynthesis via DAP pathway; (S)-tetrahydrodipicolinate from L-aspartate: step 3/4. In terms of biological role, catalyzes the condensation of (S)-aspartate-beta-semialdehyde [(S)-ASA] and pyruvate to 4-hydroxy-tetrahydrodipicolinate (HTPA). This Stenotrophomonas maltophilia (strain K279a) protein is 4-hydroxy-tetrahydrodipicolinate synthase.